The chain runs to 211 residues: Thiamine-phosphate synthase (211 aa).

4-amino-2-methyl-5-(diphosphooxymethyl)pyrimidine contacts are provided by residues 40 to 42 and asparagine 72; that span reads QLR. Mg(2+) is bound by residues aspartate 73 and aspartate 92. Serine 111 serves as a coordination point for 4-amino-2-methyl-5-(diphosphooxymethyl)pyrimidine. 136–138 contacts 2-[(2R,5Z)-2-carboxy-4-methylthiazol-5(2H)-ylidene]ethyl phosphate; the sequence is TST. Lysine 139 is a binding site for 4-amino-2-methyl-5-(diphosphooxymethyl)pyrimidine. 2-[(2R,5Z)-2-carboxy-4-methylthiazol-5(2H)-ylidene]ethyl phosphate contacts are provided by residues glycine 167 and 187–188; that span reads VS.

It belongs to the thiamine-phosphate synthase family. Requires Mg(2+) as cofactor.

The enzyme catalyses 2-[(2R,5Z)-2-carboxy-4-methylthiazol-5(2H)-ylidene]ethyl phosphate + 4-amino-2-methyl-5-(diphosphooxymethyl)pyrimidine + 2 H(+) = thiamine phosphate + CO2 + diphosphate. The catalysed reaction is 2-(2-carboxy-4-methylthiazol-5-yl)ethyl phosphate + 4-amino-2-methyl-5-(diphosphooxymethyl)pyrimidine + 2 H(+) = thiamine phosphate + CO2 + diphosphate. It catalyses the reaction 4-methyl-5-(2-phosphooxyethyl)-thiazole + 4-amino-2-methyl-5-(diphosphooxymethyl)pyrimidine + H(+) = thiamine phosphate + diphosphate. Its pathway is cofactor biosynthesis; thiamine diphosphate biosynthesis; thiamine phosphate from 4-amino-2-methyl-5-diphosphomethylpyrimidine and 4-methyl-5-(2-phosphoethyl)-thiazole: step 1/1. Its function is as follows. Condenses 4-methyl-5-(beta-hydroxyethyl)thiazole monophosphate (THZ-P) and 2-methyl-4-amino-5-hydroxymethyl pyrimidine pyrophosphate (HMP-PP) to form thiamine monophosphate (TMP). The sequence is that of Thiamine-phosphate synthase from Laribacter hongkongensis (strain HLHK9).